Reading from the N-terminus, the 483-residue chain is SWI/SNF-related matrix-associated actin-dependent regulator of chromatin subfamily D member 3 (483 aa).

Residue Ala2 is modified to N-acetylalanine. The interval 27–102 (RPGMPSGARM…ARSRSAKRRK (76 aa)) is disordered. Positions 78–88 (QSQAQGQGQPV) are enriched in low complexity. Ser178 carries the phosphoserine modification. An SWIB/MDM2 domain is found at 258–335 (YQPPQFKLDP…PQRLTALLLP (78 aa)).

Belongs to the SMARCD family. Component of the multiprotein chromatin-remodeling complexes SWI/SNF: SWI/SNF-A (BAF), SWI/SNF-B (PBAF) and related complexes. The canonical complex contains a catalytic subunit (either SMARCA4/BRG1/BAF190A or SMARCA2/BRM/BAF190B) and at least SMARCE1, ACTL6A/BAF53, SMARCC1/BAF155, SMARCC2/BAF170, and SMARCB1/SNF5/BAF47. Other subunits specific to each of the complexes may also be present permitting several possible combinations developmentally and tissue specific. Component of the BAF complex, which includes at least actin (ACTB), ARID1A/BAF250A, ARID1B/BAF250B, SMARCA2/BRM, SMARCA4/BRG1/BAF190A, ACTL6A/BAF53, ACTL6B/BAF53B, SMARCE1/BAF57, SMARCC1/BAF155, SMARCC2/BAF170, SMARCB1/SNF5/INI1, and one or more SMARCD1/BAF60A, SMARCD2/BAF60B, or SMARCD3/BAF60C. In muscle cells, the BAF complex also contains DPF3. Component of neural progenitors-specific chromatin remodeling complex (npBAF complex) composed of at least, ARID1A/BAF250A or ARID1B/BAF250B, SMARCD1/BAF60A, SMARCD3/BAF60C, SMARCA2/BRM/BAF190B, SMARCA4/BRG1/BAF190A, SMARCB1/BAF47, SMARCC1/BAF155, SMARCE1/BAF57, SMARCC2/BAF170, PHF10/BAF45A, ACTL6A/BAF53A and actin. Component of neuron-specific chromatin remodeling complex (nBAF complex) composed of at least, ARID1A/BAF250A or ARID1B/BAF250B, SMARCD1/BAF60A, SMARCD3/BAF60C, SMARCA2/BRM/BAF190B, SMARCA4/BRG1/BAF190A, SMARCB1/BAF47, SMARCC1/BAF155, SMARCE1/BAF57, SMARCC2/BAF170, DPF1/BAF45B, DPF3/BAF45C, ACTL6B/BAF53B and actin. May be a component of the SWI/SNF-B (PBAF) chromatin remodeling complex, at least composed of SMARCA4/BRG1, SMARCB1/BAF47/SNF5, ACTL6A/BAF53A or ACTL6B/BAF53B, SMARCE1/BAF57, SMARCD1/BAF60A, SMARCD2/BAF60B, perhaps SMARCD3/BAF60C, SMARCC1/BAF155, SMARCC2/BAF170, PBRM1/BAF180, ARID2/BAF200 and actin. Component of SWI/SNF (GBAF) subcomplex, which includes at least BICRA or BICRAL (mutually exclusive), BRD9, SS18, SMARCA2/BRM, SMARCA4/BRG1/BAF190A, ACTL6A/BAF53, SMARCC1/BAF155, and SMARCD1/BAF60A. Interacts with SMARCA4/BRG1/BAF190A. The precise distribution of the related SMARCD1, SMARCD2 and SMARCD3 proteins among these and other SWI/SNF nucleosome-remodeling complexes is not fully known. May allow recruitment of SWI/SNF containing complexes specifically to promoters where these factors are located. Also interacts with several nuclear receptors including PPARG/NR1C3, RXRA/NR1F1, ESR1, NR5A1, NR5A2/LRH1 and other transcriptional activators including the HLH protein SREBF1/SREBP1 and the homeobox protein PBX1. Interacts with PRDM1/BLIMP1. Ubiquitously expressed.

It localises to the nucleus. Its function is as follows. Involved in transcriptional activation and repression of select genes by chromatin remodeling (alteration of DNA-nucleosome topology). Component of SWI/SNF chromatin remodeling complexes that carry out key enzymatic activities, changing chromatin structure by altering DNA-histone contacts within a nucleosome in an ATP-dependent manner. Stimulates nuclear receptor mediated transcription. Belongs to the neural progenitors-specific chromatin remodeling complex (npBAF complex) and the neuron-specific chromatin remodeling complex (nBAF complex). During neural development a switch from a stem/progenitor to a postmitotic chromatin remodeling mechanism occurs as neurons exit the cell cycle and become committed to their adult state. The transition from proliferating neural stem/progenitor cells to postmitotic neurons requires a switch in subunit composition of the npBAF and nBAF complexes. As neural progenitors exit mitosis and differentiate into neurons, npBAF complexes which contain ACTL6A/BAF53A and PHF10/BAF45A, are exchanged for homologous alternative ACTL6B/BAF53B and DPF1/BAF45B or DPF3/BAF45C subunits in neuron-specific complexes (nBAF). The npBAF complex is essential for the self-renewal/proliferative capacity of the multipotent neural stem cells. The nBAF complex along with CREST plays a role regulating the activity of genes essential for dendrite growth. The protein is SWI/SNF-related matrix-associated actin-dependent regulator of chromatin subfamily D member 3 (Smarcd3) of Mus musculus (Mouse).